Consider the following 143-residue polypeptide: Flagellar assembly factor FliW (143 aa).

Belongs to the FliW family. As to quaternary structure, interacts with translational regulator CsrA and flagellin(s).

The protein resides in the cytoplasm. Its function is as follows. Acts as an anti-CsrA protein, binds CsrA and prevents it from repressing translation of its target genes, one of which is flagellin. Binds to flagellin and participates in the assembly of the flagellum. In Clostridium botulinum (strain Okra / Type B1), this protein is Flagellar assembly factor FliW.